We begin with the raw amino-acid sequence, 311 residues long: Methionyl-tRNA formyltransferase (311 aa).

114 to 117 (SLLP) lines the (6S)-5,6,7,8-tetrahydrofolate pocket.

It belongs to the Fmt family.

It carries out the reaction L-methionyl-tRNA(fMet) + (6R)-10-formyltetrahydrofolate = N-formyl-L-methionyl-tRNA(fMet) + (6S)-5,6,7,8-tetrahydrofolate + H(+). Attaches a formyl group to the free amino group of methionyl-tRNA(fMet). The formyl group appears to play a dual role in the initiator identity of N-formylmethionyl-tRNA by promoting its recognition by IF2 and preventing the misappropriation of this tRNA by the elongation apparatus. This is Methionyl-tRNA formyltransferase from Corynebacterium diphtheriae (strain ATCC 700971 / NCTC 13129 / Biotype gravis).